Consider the following 217-residue polypeptide: 3,4-dihydroxy-2-butanone 4-phosphate synthase (217 aa).

D-ribulose 5-phosphate is bound by residues 37–38 (RE), Asp-42, 150–154 (RRGHT), and Glu-174. Glu-38 serves as a coordination point for Mg(2+). Residue His-153 coordinates Mg(2+).

It belongs to the DHBP synthase family. As to quaternary structure, homodimer. The cofactor is Mg(2+). Requires Mn(2+) as cofactor.

The catalysed reaction is D-ribulose 5-phosphate = (2S)-2-hydroxy-3-oxobutyl phosphate + formate + H(+). It functions in the pathway cofactor biosynthesis; riboflavin biosynthesis; 2-hydroxy-3-oxobutyl phosphate from D-ribulose 5-phosphate: step 1/1. In terms of biological role, catalyzes the conversion of D-ribulose 5-phosphate to formate and 3,4-dihydroxy-2-butanone 4-phosphate. The sequence is that of 3,4-dihydroxy-2-butanone 4-phosphate synthase from Shewanella sp. (strain MR-4).